The following is an 865-amino-acid chain: MSGRLVVDLQDVDAAGLAEVGGKGAHLGELSRIDGVRVPSGFCVTTHAFRRIMAEAPESGELLDRLSRVDEGDQEAVRSLAARLRQVVGATPLPDEVAAAVTGALARHGERSAYAVRSSATAEDLPTASFAGQQDTYLNVVGTEEILRHVSRCWASLFTERAVTYRGRQGVDHRTVHMGVVVQRMVVPRASGILFTADPVTGDRRTATVDAGFGLGEALVSGLVDPDVLTVRHGEVVARTIAAKRRALHAVQGGGTRETPIEERRQREPVLTDDQAVELVALGRRIEAHFGSPQDIEWCLDDDGFHIVQSRPITTLFPVPERDDDVFRVYLSVGHQQMMTDAMKPLGLSMWRLTALAPMYEAGGRLFVDATARLAVPGSRATLLDVVGRGDPLTRDALETVLENGEFEPTPAETDGGAPPAGDGAEPDEADPSIVTELIERSRRSLAELEREIGTKSGPALFAFLREAFEEHKRVVGDPLNIRAIMAGMEATWWLNDRLEEWLGEKNAADTLTLSAPDNVTSEMGLELLDVADVVRTHPEVVAFLEGVEDDGFLDELPKVPGGAEARDAFEAYLDRYGMRCVGEIDITXPPVRERPSALVPVVLDHVRAFGPGAAARRFEDGRRRALAKEREVLERLRDLPDGERRADAARRMIRQVRAFAGYREYPKYAIVSRSFVYRQALLREADELVRAGVLADREDVHYLTFDEFEEAVRVRRVDERLVRRRKDAFRSYQALTPPRVLTSEGVALSGAYRRDDVPEGALAGLAVSAGTVEGRARVVLDMAEADLEAGDILVTRFTDPSWSPLFVGIAGLVTEVGGLMTHGAVIAREYGLAAVVGVERATRLIRDGQRIRVHGTEGYIELLS.

The tract at residues 2–314 (SGRLVVDLQD…FHIVQSRPIT (313 aa)) is ATP-binding. Residues K23, R117, G132, T136, Q183, E297, Q309, and R311 each contribute to the ATP site. The rifampicin-binding stretch occupies residues 327-752 (FRVYLSVGHQ…TSEGVALSGA (426 aa)). Positions 403–430 (ENGEFEPTPAETDGGAPPAGDGAEPDEA) are disordered. Residues 409–424 (PTPAETDGGAPPAGDG) are compositionally biased toward low complexity. The interval 765 to 863 (GLAVSAGTVE…VHGTEGYIEL (99 aa)) is swivel phosphohistidine. The active-site Tele-phosphohistidine intermediate is the H823.

Belongs to the rifampicin phosphotransferase family.

It catalyses the reaction rifampicin + ATP + H2O = 21-phosphorifampicin + AMP + phosphate + 2 H(+). In terms of biological role, catalyzes the phosphorylation of rifampicin, also known as rifampin (RIF), leading to its inactivation. Confers high level resistance to a variety of clinically used rifamycin antibiotics. The sequence is that of Rifampicin phosphotransferase from Streptomyces sp.